A 55-amino-acid polypeptide reads, in one-letter code: Large ribosomal subunit protein bL33 (55 aa).

The protein belongs to the bacterial ribosomal protein bL33 family.

The protein is Large ribosomal subunit protein bL33 of Hyphomonas neptunium (strain ATCC 15444).